Consider the following 272-residue polypeptide: Streptomycin 3''-kinase (272 aa).

Residue D190 is the Proton acceptor of the active site.

Belongs to the aminoglycoside phosphotransferase family.

It catalyses the reaction streptomycin + ATP = streptomycin 3''-phosphate + ADP + H(+). In terms of biological role, the aminoglycoside phosphotransferases achieve inactivation of their antibiotic substrates by phosphorylation. This is Streptomycin 3''-kinase (aphE) from Streptomyces griseus.